The following is a 158-amino-acid chain: Protein shisa-like-2B (158 aa).

Residues 65–85 (IGALVGLGIAALVLLAFVISV) form a helical membrane-spanning segment.

The protein belongs to the shisa family.

Its subcellular location is the membrane. This chain is Protein shisa-like-2B (Shisal2b), found in Mus musculus (Mouse).